The following is a 229-amino-acid chain: Ribosome maturation factor RimM (229 aa).

A disordered region spans residues 1-39; that stretch reads MAGHDSGSAKRGRSPSFGVFVRKPVERAPTKGAGDGAAD. The PRC barrel domain occupies 148–229; sequence ADEFYWVDLI…RIVVDWEADY (82 aa).

The protein belongs to the RimM family. As to quaternary structure, binds ribosomal protein uS19.

The protein resides in the cytoplasm. Its function is as follows. An accessory protein needed during the final step in the assembly of 30S ribosomal subunit, possibly for assembly of the head region. Essential for efficient processing of 16S rRNA. May be needed both before and after RbfA during the maturation of 16S rRNA. It has affinity for free ribosomal 30S subunits but not for 70S ribosomes. This chain is Ribosome maturation factor RimM, found in Burkholderia thailandensis (strain ATCC 700388 / DSM 13276 / CCUG 48851 / CIP 106301 / E264).